Reading from the N-terminus, the 702-residue chain is Acetylcholinesterase (702 aa).

A signal peptide spans 1 to 36 (MEIRGLITRLLGPCHLRHLILCSLGLYSILVQSVHC). The interval 107 to 134 (HIHSTTTRRRGLTRRESSSDATDSDPLV) is disordered. The N-linked (GlcNAc...) asparagine glycan is linked to Asn-187. Cys-195 and Cys-222 are disulfide-bonded. Ser-327 serves as the catalytic Acyl-ester intermediate. The cysteines at positions 381 and 394 are disulfide-linked. Residues Glu-453 and His-567 each act as charge relay system in the active site. A disulfide bond links Cys-529 and Cys-650. N-linked (GlcNAc...) asparagine glycosylation occurs at Asn-637.

Belongs to the type-B carboxylesterase/lipase family.

Its subcellular location is the synapse. It localises to the secreted. The protein localises to the cell membrane. It catalyses the reaction acetylcholine + H2O = choline + acetate + H(+). Rapidly hydrolyzes choline released into the synapse. The chain is Acetylcholinesterase (ACHE1) from Culex pipiens (House mosquito).